The following is a 180-amino-acid chain: MEQRRLASTEWVDIVNEENEVIAQASREQMRAQCLRHRATYIVVHDGMGKILVQRRTETKDFLPGMLDATAGGVVQADEQLLESARREAEEELGIAGVPFAEHGQFYFEDKNCRVWGALFSCVSHGPFALQEDEVSGVCWLTPEEITARCDEFTPDSLKALALWMKRNAKNEAVETETAE.

One can recognise a Nudix hydrolase domain in the interval 35 to 163 (LRHRATYIVV…TPDSLKALAL (129 aa)). Positions 72 to 94 (GGVVQADEQLLESARREAEEELG) match the Nudix box motif. The Mg(2+) site is built by Glu-88 and Glu-92.

The protein belongs to the Nudix hydrolase family. It depends on Mg(2+) as a cofactor.

This is an uncharacterized protein from Shigella flexneri.